The primary structure comprises 111 residues: Ribosome-binding factor A (111 aa).

The protein belongs to the RbfA family. As to quaternary structure, monomer. Binds 30S ribosomal subunits, but not 50S ribosomal subunits or 70S ribosomes.

The protein localises to the cytoplasm. In terms of biological role, one of several proteins that assist in the late maturation steps of the functional core of the 30S ribosomal subunit. Associates with free 30S ribosomal subunits (but not with 30S subunits that are part of 70S ribosomes or polysomes). Required for efficient processing of 16S rRNA. May interact with the 5'-terminal helix region of 16S rRNA. The polypeptide is Ribosome-binding factor A (Helicobacter pylori (strain HPAG1)).